We begin with the raw amino-acid sequence, 177 residues long: Large ribosomal subunit protein uL6 (177 aa).

The protein belongs to the universal ribosomal protein uL6 family. Part of the 50S ribosomal subunit.

Its function is as follows. This protein binds to the 23S rRNA, and is important in its secondary structure. It is located near the subunit interface in the base of the L7/L12 stalk, and near the tRNA binding site of the peptidyltransferase center. This chain is Large ribosomal subunit protein uL6, found in Yersinia enterocolitica serotype O:8 / biotype 1B (strain NCTC 13174 / 8081).